The chain runs to 243 residues: Dirigent protein 16 (243 aa).

A signal peptide spans Met1–Ala24.

This sequence belongs to the plant dirigent protein family. In terms of assembly, homodimer.

It is found in the secreted. It localises to the extracellular space. The protein resides in the apoplast. In terms of biological role, dirigent proteins impart stereoselectivity on the phenoxy radical-coupling reaction, yielding optically active lignans from two molecules of coniferyl alcohol in the biosynthesis of lignans, flavonolignans, and alkaloids and thus plays a central role in plant secondary metabolism. The polypeptide is Dirigent protein 16 (DIR16) (Arabidopsis thaliana (Mouse-ear cress)).